A 443-amino-acid chain; its full sequence is Xaa-Pro dipeptidase (443 aa).

Mn(2+)-binding residues include Asp246, Asp257, His339, Glu384, and Glu423.

Belongs to the peptidase M24B family. Bacterial-type prolidase subfamily. The cofactor is Mn(2+).

The enzyme catalyses Xaa-L-Pro dipeptide + H2O = an L-alpha-amino acid + L-proline. In terms of biological role, splits dipeptides with a prolyl residue in the C-terminal position. The chain is Xaa-Pro dipeptidase from Escherichia coli O157:H7.